The primary structure comprises 123 residues: Small ribosomal subunit protein uS12cz/uS12cy (123 aa).

Belongs to the universal ribosomal protein uS12 family. As to quaternary structure, part of the 30S ribosomal subunit.

The protein localises to the plastid. It localises to the chloroplast. With S4 and S5 plays an important role in translational accuracy. Located at the interface of the 30S and 50S subunits. In Platanus occidentalis (Sycamore), this protein is Small ribosomal subunit protein uS12cz/uS12cy (rps12-A).